A 157-amino-acid polypeptide reads, in one-letter code: Lipoprotein signal peptidase (157 aa).

Helical transmembrane passes span 10–30, 36–56, 58–78, and 84–104; these read FIFI…KYAI, YESS…FSLL, FLEG…FIFL, and LFKA…SNIL. Active-site residues include Asp114 and Asp131. Residues 123-143 traverse the membrane as a helical segment; the sequence is DFAIFNFADVMIDVGVGVLLI.

Belongs to the peptidase A8 family.

Its subcellular location is the cell inner membrane. It catalyses the reaction Release of signal peptides from bacterial membrane prolipoproteins. Hydrolyzes -Xaa-Yaa-Zaa-|-(S,diacylglyceryl)Cys-, in which Xaa is hydrophobic (preferably Leu), and Yaa (Ala or Ser) and Zaa (Gly or Ala) have small, neutral side chains.. The protein operates within protein modification; lipoprotein biosynthesis (signal peptide cleavage). Functionally, this protein specifically catalyzes the removal of signal peptides from prolipoproteins. This is Lipoprotein signal peptidase from Helicobacter acinonychis (strain Sheeba).